A 235-amino-acid chain; its full sequence is Probable transcriptional regulatory protein CJJ81176_1187 (235 aa).

This sequence belongs to the TACO1 family.

It is found in the cytoplasm. The sequence is that of Probable transcriptional regulatory protein CJJ81176_1187 from Campylobacter jejuni subsp. jejuni serotype O:23/36 (strain 81-176).